Here is a 360-residue protein sequence, read N- to C-terminus: Molybdenum import ATP-binding protein ModC (360 aa).

An ABC transporter domain is found at 5–234 (VKLHLGYQDF…LDLPLALGDD (230 aa)). 32 to 39 (GHSGSGKT) contacts ATP. Positions 295–360 (HSSILNRLPV…AQIKAVAVLA (66 aa)) constitute a Mop domain.

The protein belongs to the ABC transporter superfamily. Molybdate importer (TC 3.A.1.8) family. In terms of assembly, the complex is composed of two ATP-binding proteins (ModC), two transmembrane proteins (ModB) and a solute-binding protein (ModA).

It localises to the cell inner membrane. It catalyses the reaction molybdate(out) + ATP + H2O = molybdate(in) + ADP + phosphate + H(+). Functionally, part of the ABC transporter complex ModABC involved in molybdenum import. Responsible for energy coupling to the transport system. This chain is Molybdenum import ATP-binding protein ModC, found in Pseudomonas fluorescens (strain ATCC BAA-477 / NRRL B-23932 / Pf-5).